Reading from the N-terminus, the 209-residue chain is ATP-dependent Clp protease proteolytic subunit (209 aa).

Ser106 serves as the catalytic Nucleophile. The active site involves His131.

This sequence belongs to the peptidase S14 family. As to quaternary structure, fourteen ClpP subunits assemble into 2 heptameric rings which stack back to back to give a disk-like structure with a central cavity, resembling the structure of eukaryotic proteasomes.

The protein localises to the cytoplasm. It catalyses the reaction Hydrolysis of proteins to small peptides in the presence of ATP and magnesium. alpha-casein is the usual test substrate. In the absence of ATP, only oligopeptides shorter than five residues are hydrolyzed (such as succinyl-Leu-Tyr-|-NHMec, and Leu-Tyr-Leu-|-Tyr-Trp, in which cleavage of the -Tyr-|-Leu- and -Tyr-|-Trp bonds also occurs).. In terms of biological role, cleaves peptides in various proteins in a process that requires ATP hydrolysis. Has a chymotrypsin-like activity. Plays a major role in the degradation of misfolded proteins. The polypeptide is ATP-dependent Clp protease proteolytic subunit (Brucella canis (strain ATCC 23365 / NCTC 10854 / RM-666)).